The sequence spans 332 residues: Glyceraldehyde-3-phosphate dehydrogenase 2 (332 aa).

Residues Arg-11–Ile-12, Asp-32, and Arg-77 contribute to the NAD(+) site. D-glyceraldehyde 3-phosphate contacts are provided by residues Ser-148–Thr-150, Thr-179, Thr-208–Gly-209, and Arg-231. The active-site Nucleophile is the Cys-149. Position 273 is a phosphotyrosine (Tyr-273). Phosphothreonine is present on Thr-274. An NAD(+)-binding site is contributed by Asn-313.

The protein belongs to the glyceraldehyde-3-phosphate dehydrogenase family. Homotetramer.

Its subcellular location is the cytoplasm. The enzyme catalyses D-glyceraldehyde 3-phosphate + phosphate + NAD(+) = (2R)-3-phospho-glyceroyl phosphate + NADH + H(+). It participates in carbohydrate degradation; glycolysis; pyruvate from D-glyceraldehyde 3-phosphate: step 1/5. The protein is Glyceraldehyde-3-phosphate dehydrogenase 2 (Gapdh2) of Drosophila melanogaster (Fruit fly).